The chain runs to 784 residues: Rabenosyn-5 (784 aa).

Ala2 carries the post-translational modification N-acetylalanine. Residue Ser3 is modified to Phosphoserine. Residues 14–37 (FLCPLCLKDLQSFYQLHSHYEEEH) form a C2H2-type zinc finger. The necessary for the correct targeting to endosomes stretch occupies residues 100–263 (RSHLSDFKKH…HCKDTLLKRE (164 aa)). The segment at 157–260 (DQDVPFCPDC…CCTHCKDTLL (104 aa)) adopts an FYVE-type zinc-finger fold. Zn(2+) is bound by residues Cys163, Cys166, Cys179, Cys182, Cys187, and Cys190. Over residues 207 to 224 (KESLSTHTSPSQSPNSVH) the composition is skewed to polar residues. The interval 207–241 (KESLSTHTSPSQSPNSVHGSRRGSISSMSSVSSVL) is disordered. Ser215, Ser219, Ser226, and Ser230 each carry phosphoserine. Residues 228-240 (RGSISSMSSVSSV) are compositionally biased toward low complexity. Cys252 and Cys255 together coordinate Zn(2+). The interval 264–500 (QQIDEKEHTP…QLQDEYDQQQ (237 aa)) is necessary for interaction with RAB4A. Positions 264–784 (QQIDEKEHTP…TLAKQKGGTD (521 aa)) are necessary for interaction with EHD1. Coiled coils occupy residues 378–414 (TKEQ…LEER) and 472–531 (QAKA…RELE). A compositionally biased stretch (basic and acidic residues) spans 390-400 (KEEMERKRAVE). The segment at 390–429 (KEEMERKRAVERQAALESQRRLEERQSGLASRAANGEVAS) is disordered. The UIM domain maps to 496 to 515 (YDQQQTEKAIELSRRQAEEE). The disordered stretch occupies residues 574 to 732 (DLGSSPVPSS…DSDSGPEAEE (159 aa)). Residues 579–598 (PVPSSTAPKTPSLSSTQPTR) show a composition bias toward polar residues. Residues 627-784 (PFDEEDLSSP…TLAKQKGGTD (158 aa)) are necessary for interaction with RAB5A. Acidic residues predominate over residues 663 to 673 (PFEEEDEEEEA). Ser684 is modified (phosphoserine). Residues 722–732 (MDSDSGPEAEE) show a composition bias toward acidic residues.

As to quaternary structure, interacts with EHD1, RAB4A, RAB5A, RAB14, RAB22A, RAB24 and VPS45. Binds simultaneously to RAB4A and RAB5A in vitro. Interacts with RAB4A and RAB5A that has been activated by GTP binding.

It is found in the cell membrane. Its subcellular location is the early endosome membrane. Its function is as follows. Rab4/Rab5 effector protein acting in early endocytic membrane fusion and membrane trafficking of recycling endosomes. Required for endosome fusion either homotypically or with clathrin coated vesicles. Plays a role in the lysosomal trafficking of CTSD/cathepsin D from the Golgi to lysosomes. Also promotes the recycling of transferrin directly from early endosomes to the plasma membrane. Binds phospholipid vesicles containing phosphatidylinositol 3-phosphate (PtdInsP3). Plays a role in the recycling of transferrin receptor to the plasma membrane. The sequence is that of Rabenosyn-5 from Homo sapiens (Human).